The sequence spans 98 residues: MSCFDLCRPCGPTPLANSCNEPCVRQCQDSRVVIQPSPVVVTLPGPILSSFPQNTAAGSSTSAAVGSILSEEGVPISSGGFGISGLGSRFSGRRCLPC.

Belongs to the avian keratin family. In terms of assembly, the avian keratins (F-ker, S-ker, C-ker and B-ker) are a complex mixture of very similar polypeptides.

The chain is Feather keratin 1 from Gallus gallus (Chicken).